The primary structure comprises 385 residues: Galactokinase (385 aa).

34-37 contributes to the substrate binding site; it reads EHTD. Residue 124–130 participates in ATP binding; the sequence is SAGLSSS. Mg(2+)-binding residues include Ser130 and Glu162. Asp174 (proton acceptor) is an active-site residue. Tyr223 contacts substrate.

Belongs to the GHMP kinase family. GalK subfamily.

It is found in the cytoplasm. The enzyme catalyses alpha-D-galactose + ATP = alpha-D-galactose 1-phosphate + ADP + H(+). The protein operates within carbohydrate metabolism; galactose metabolism. Functionally, catalyzes the transfer of the gamma-phosphate of ATP to D-galactose to form alpha-D-galactose-1-phosphate (Gal-1-P). This Pasteurella multocida (strain Pm70) protein is Galactokinase.